Consider the following 74-residue polypeptide: Brevinin-2MT1 (74 aa).

A signal peptide spans 1–22; that stretch reads MFTMKKSLLVLFFLGTISLSLC. Residues 23 to 39 constitute a propeptide, removed in mature form; that stretch reads EEERNADEDDGEMTEEE. C68 and C74 are oxidised to a cystine.

This sequence belongs to the frog skin active peptide (FSAP) family. Brevinin subfamily. Expressed by the skin glands.

It is found in the secreted. Antimicrobial peptide. Active against a variety of Gram-negative and Gram-positive bacterial strains. Active against fungi. Shows hemolytic activity against human erythrocytes. The chain is Brevinin-2MT1 from Amolops mantzorum (Sichuan torrent frog).